The primary structure comprises 532 residues: Apoptosis-inducing factor 1, mitochondrial (532 aa).

The N-terminal 26 residues, 1 to 26 (MIRNLTKLTKFTIGNRFYQSSSKGRF), are a transit peptide targeting the mitochondrion. Residues 63–84 (STPSIDVKEKKSQPPKTKEDYQ) are disordered. The segment at 98 to 440 (YVIIGGGTAA…APYTYQPFFW (343 aa)) is FAD-dependent oxidoreductase. Residues 102–106 (GGGTA), 128–129 (KE), arginine 136, and lysine 141 contribute to the FAD site. Tryptophan 160 contacts NAD(+). Residues valine 188 and arginine 236 each contribute to the FAD site. NAD(+) is bound by residues 260 to 263 (GGFL), glutamate 288, and glycine 353. Aspartate 392 serves as a coordination point for FAD. The Nuclear localization signal motif lies at 400–406 (SLGVRRR). Residues 408 to 409 (EH), tryptophan 440, and glutamate 450 each bind NAD(+). Residues 409 to 410 (HH) and tryptophan 440 contribute to the FAD site.

The protein belongs to the FAD-dependent oxidoreductase family. It depends on FAD as a cofactor.

It is found in the mitochondrion. It localises to the cytoplasm. The protein localises to the nucleus. The catalysed reaction is A + NADH + H(+) = AH2 + NAD(+). Its function is as follows. Probable NADH oxidoreductase that acts as a caspase-independent mitochondrial effector of apoptotic cell death. The chain is Apoptosis-inducing factor 1, mitochondrial (aif) from Dictyostelium discoideum (Social amoeba).